Reading from the N-terminus, the 377-residue chain is Actin-related protein T2 (377 aa).

The protein belongs to the actin family.

It is found in the cytoplasm. It localises to the cytoskeleton. The sequence is that of Actin-related protein T2 (ACTRT2) from Homo sapiens (Human).